The chain runs to 589 residues: ATP-dependent ubiquitin transferase-like protein Cap2 (589 aa).

A Glycyl cysteine dithioester (Cys-Gly) (interchain with G-Cter in DncV) cross-link involves residue Cys-13. Residue Lys-77 forms a Glycyl lysine isopeptide (Lys-Gly) (interchain with G-Cter in DncV) linkage. Cys-91 functions as the For E2-like domain in the catalytic mechanism. Glycyl lysine isopeptide (Lys-Gly) (interchain with G-Cter in DncV) cross-links involve residues Lys-305, Lys-387, and Lys-484. Cys-493 participates in a covalent cross-link: Glycyl cysteine dithioester (Cys-Gly) (interchain with G-Cter in DncV). Active-site for E1-like domain residues include Cys-493, Cys-496, and Cys-513. A Glycyl cysteine dithioester (Cys-Gly) (interchain with G-Cter in DncV) cross-link involves residue Cys-513. Lys-523 participates in a covalent cross-link: Glycyl lysine isopeptide (Lys-Gly) (interchain with G-Cter in DncV).

It in the C-terminal section; belongs to the HesA/MoeB/ThiF family. A Cap2 dimer is bound on either side by a DncV monomer. Conjugated to DncV via 5 different Lys residues and 3 Cys residues.

Functionally, CD-NTase priming component of a CBASS antiviral system. CBASS (cyclic oligonucleotide-based antiphage signaling system) provides immunity against bacteriophages. The CD-NTase protein (DncV) synthesizes cyclic nucleotides in response to infection; these serve as specific second messenger signals. The signals activate a diverse range of effectors, leading to bacterial cell death and thus abortive phage infection. A type II-A(GA) CBASS system. Its function is as follows. Conjugates DncV to itself in vitro and to other cellular proteins in vivo; conjugation requires ATP. This primes DncV, upon phage infection CdnA activates and makes cyclic nucleotides. Protects E.coli against phage infection. When capV and dncV are introduced in E.coli MG1655 there is 1000-fold protection against phage P1; protection against other phage (T2, T4, T5, T6 and lambda-vir) requires the 2 subsequent genes. In another paper the capV-dncV-cap2-cap3 operon gives 10(4)-10(5)-fold protection against phages lambda, T2, T4 and T6, about 1000-fold protection against P1 and 10-fold protection against T5. The protein is ATP-dependent ubiquitin transferase-like protein Cap2 of Escherichia coli (strain TW11681).